Reading from the N-terminus, the 390-residue chain is Probable tRNA sulfurtransferase (390 aa).

Residues 60-162 (KQIIDDLKEV…YDCAIVYGHK (103 aa)) enclose the THUMP domain. ATP-binding positions include 180–181 (LL), 205–206 (TF), arginine 264, glycine 286, and glutamine 295.

The protein belongs to the ThiI family.

Its subcellular location is the cytoplasm. It carries out the reaction [ThiI sulfur-carrier protein]-S-sulfanyl-L-cysteine + a uridine in tRNA + 2 reduced [2Fe-2S]-[ferredoxin] + ATP + H(+) = [ThiI sulfur-carrier protein]-L-cysteine + a 4-thiouridine in tRNA + 2 oxidized [2Fe-2S]-[ferredoxin] + AMP + diphosphate. The catalysed reaction is [ThiS sulfur-carrier protein]-C-terminal Gly-Gly-AMP + S-sulfanyl-L-cysteinyl-[cysteine desulfurase] + AH2 = [ThiS sulfur-carrier protein]-C-terminal-Gly-aminoethanethioate + L-cysteinyl-[cysteine desulfurase] + A + AMP + 2 H(+). It functions in the pathway cofactor biosynthesis; thiamine diphosphate biosynthesis. In terms of biological role, catalyzes the ATP-dependent transfer of a sulfur to tRNA to produce 4-thiouridine in position 8 of tRNAs, which functions as a near-UV photosensor. Also catalyzes the transfer of sulfur to the sulfur carrier protein ThiS, forming ThiS-thiocarboxylate. This is a step in the synthesis of thiazole, in the thiamine biosynthesis pathway. The sulfur is donated as persulfide by IscS. The chain is Probable tRNA sulfurtransferase from Ureaplasma parvum serovar 3 (strain ATCC 27815 / 27 / NCTC 11736).